Here is a 569-residue protein sequence, read N- to C-terminus: Arginine--tRNA ligase (569 aa).

The short motif at 123–133 (PNIAKRMHIGH) is the 'HIGH' region element.

Belongs to the class-I aminoacyl-tRNA synthetase family. In terms of assembly, monomer.

It is found in the cytoplasm. The enzyme catalyses tRNA(Arg) + L-arginine + ATP = L-arginyl-tRNA(Arg) + AMP + diphosphate. This chain is Arginine--tRNA ligase, found in Fusobacterium nucleatum subsp. nucleatum (strain ATCC 25586 / DSM 15643 / BCRC 10681 / CIP 101130 / JCM 8532 / KCTC 2640 / LMG 13131 / VPI 4355).